A 594-amino-acid chain; its full sequence is Probable translation initiation factor IF-2 (594 aa).

The 216-residue stretch at 11–226 (LRTPIVCVMG…LIGLAQRFLE (216 aa)) folds into the tr-type G domain. Residues 20-27 (GHVDHGKT) form a G1 region. 20 to 27 (GHVDHGKT) provides a ligand contact to GTP. The interval 45-49 (AITQH) is G2. A G3 region spans residues 81–84 (DTPG). Residues 81–85 (DTPGH) and 135–138 (NKID) contribute to the GTP site. A G4 region spans residues 135–138 (NKID). The interval 203 to 205 (SAR) is G5.

Belongs to the TRAFAC class translation factor GTPase superfamily. Classic translation factor GTPase family. IF-2 subfamily.

In terms of biological role, function in general translation initiation by promoting the binding of the formylmethionine-tRNA to ribosomes. Seems to function along with eIF-2. The polypeptide is Probable translation initiation factor IF-2 (Methanocella arvoryzae (strain DSM 22066 / NBRC 105507 / MRE50)).